Consider the following 792-residue polypeptide: Probable CoA-transferase Rv1866 (792 aa).

The active-site Nucleophile is the Asp558.

Belongs to the CoA-transferase III family.

Probable CoA-transferase. The sequence is that of Probable CoA-transferase Rv1866 from Mycobacterium tuberculosis (strain ATCC 25618 / H37Rv).